The following is a 350-amino-acid chain: Heat-inducible transcription repressor HrcA (350 aa).

The protein belongs to the HrcA family.

In terms of biological role, negative regulator of class I heat shock genes (grpE-dnaK-dnaJ and groELS operons). Prevents heat-shock induction of these operons. The chain is Heat-inducible transcription repressor HrcA from Xanthomonas axonopodis pv. citri (strain 306).